The following is a 173-amino-acid chain: Ribosome maturation factor RimM (173 aa).

In terms of domain architecture, PRC barrel spans 94 to 173 (EGEFYWRDLI…TIEVDWDPGF (80 aa)).

The protein belongs to the RimM family. Binds ribosomal protein uS19.

The protein localises to the cytoplasm. Its function is as follows. An accessory protein needed during the final step in the assembly of 30S ribosomal subunit, possibly for assembly of the head region. Essential for efficient processing of 16S rRNA. May be needed both before and after RbfA during the maturation of 16S rRNA. It has affinity for free ribosomal 30S subunits but not for 70S ribosomes. In Aeromonas salmonicida (strain A449), this protein is Ribosome maturation factor RimM.